A 72-amino-acid polypeptide reads, in one-letter code: Putative sodium channel toxin Ts18 (72 aa).

An N-terminal signal peptide occupies residues 1–21 (MNFRFPFLLMITISLIGAVLT). Intrachain disulfides connect cysteine 38-cysteine 61, cysteine 47-cysteine 66, and cysteine 51-cysteine 68.

The protein belongs to the long (3 C-C) scorpion toxin superfamily. In terms of tissue distribution, expressed by the venom gland.

It localises to the secreted. Its function is as follows. Binds to sodium channels (Nav) and affects the channel activation process. The chain is Putative sodium channel toxin Ts18 from Tityus serrulatus (Brazilian scorpion).